The following is a 920-amino-acid chain: Isoleucine--tRNA ligase (920 aa).

The 'HIGH' region signature appears at 58–68; that stretch reads PYANGHLHLGH. Glu-569 contacts L-isoleucyl-5'-AMP. A 'KMSKS' region motif is present at residues 610 to 614; that stretch reads KMSKS. Lys-613 contacts ATP. Zn(2+) contacts are provided by Cys-895, Cys-898, Cys-910, and Cys-913.

Belongs to the class-I aminoacyl-tRNA synthetase family. IleS type 1 subfamily. Monomer. The cofactor is Zn(2+).

It localises to the cytoplasm. The enzyme catalyses tRNA(Ile) + L-isoleucine + ATP = L-isoleucyl-tRNA(Ile) + AMP + diphosphate. Functionally, catalyzes the attachment of isoleucine to tRNA(Ile). As IleRS can inadvertently accommodate and process structurally similar amino acids such as valine, to avoid such errors it has two additional distinct tRNA(Ile)-dependent editing activities. One activity is designated as 'pretransfer' editing and involves the hydrolysis of activated Val-AMP. The other activity is designated 'posttransfer' editing and involves deacylation of mischarged Val-tRNA(Ile). This is Isoleucine--tRNA ligase from Helicobacter pylori (strain G27).